A 553-amino-acid polypeptide reads, in one-letter code: uncharacterized protein (553 aa).

The next 2 helical transmembrane spans lie at 6–26 (IKIF…QVDA) and 524–544 (SYWI…GYVF).

The protein to M.jannaschii MJ0795 and MJ1506.

Its subcellular location is the cell membrane. This is an uncharacterized protein from Methanocaldococcus jannaschii (strain ATCC 43067 / DSM 2661 / JAL-1 / JCM 10045 / NBRC 100440) (Methanococcus jannaschii).